Reading from the N-terminus, the 597-residue chain is C4b-binding protein alpha chain (597 aa).

The N-terminal stretch at 1 to 48 is a signal peptide; that stretch reads MHPPKTPSGALHRKRKMAAWPFSRLWKVSDPILFQMTLIAALLPAVLG. 8 Sushi domains span residues 49 to 110, 111 to 172, 173 to 236, 237 to 296, 297 to 362, 363 to 424, 425 to 482, and 483 to 540; these read NCGP…FCIY, KRCR…QCEI, VKCK…TCEK, ITCR…ACEP, NSCI…GCEA, LCCP…SCGD, ICNF…QCKA, and LCRK…KCEW. 16 disulfide bridges follow: cysteine 50–cysteine 96, cysteine 81–cysteine 108, cysteine 113–cysteine 154, cysteine 140–cysteine 170, cysteine 175–cysteine 217, cysteine 203–cysteine 234, cysteine 239–cysteine 281, cysteine 267–cysteine 294, cysteine 299–cysteine 348, cysteine 332–cysteine 360, cysteine 365–cysteine 409, cysteine 399–cysteine 422, cysteine 426–cysteine 468, cysteine 454–cysteine 480, cysteine 484–cysteine 525, and cysteine 511–cysteine 538. N-linked (GlcNAc...) asparagine glycosylation is present at asparagine 221. Asparagine 506 and asparagine 528 each carry an N-linked (GlcNAc...) asparagine glycan.

In terms of assembly, disulfide-linked complex of alpha and beta chains of 3 possible sorts: a 570 kDa complex of 7 alpha chains and 1 beta chain, a 530 kDa homoheptamer of alpha chains or a 500 kDa complex of 6 alpha chains and 1 beta chain. The central body of the alpha chain homomer supports tentacles, each with the binding site for C4b at the end. As to quaternary structure, (Microbial infection) Interacts with Staphylococcus aureus protein SdrE; this interaction inhibits complement-mediated bacterial opsonization. Chylomicrons in the plasma.

The protein localises to the secreted. Controls the classical pathway of complement activation. It binds as a cofactor to C3b/C4b inactivator (C3bINA), which then hydrolyzes the complement fragment C4b. It also accelerates the degradation of the C4bC2a complex (C3 convertase) by dissociating the complement fragment C2a. Alpha chain binds C4b. It also interacts with anticoagulant protein S and with serum amyloid P component. The sequence is that of C4b-binding protein alpha chain (C4BPA) from Homo sapiens (Human).